Here is a 270-residue protein sequence, read N- to C-terminus: 4-hydroxy-tetrahydrodipicolinate reductase (270 aa).

NAD(+) contacts are provided by residues 11-16 and E37; that span reads GASGRM. Residue R38 participates in NADP(+) binding. NAD(+) contacts are provided by residues 101–103 and 125–128; these read GTT and APNM. Catalysis depends on H158, which acts as the Proton donor/acceptor. A (S)-2,3,4,5-tetrahydrodipicolinate-binding site is contributed by H159. K162 serves as the catalytic Proton donor. 168–169 is a (S)-2,3,4,5-tetrahydrodipicolinate binding site; it reads GT.

Belongs to the DapB family.

Its subcellular location is the cytoplasm. The enzyme catalyses (S)-2,3,4,5-tetrahydrodipicolinate + NAD(+) + H2O = (2S,4S)-4-hydroxy-2,3,4,5-tetrahydrodipicolinate + NADH + H(+). The catalysed reaction is (S)-2,3,4,5-tetrahydrodipicolinate + NADP(+) + H2O = (2S,4S)-4-hydroxy-2,3,4,5-tetrahydrodipicolinate + NADPH + H(+). It functions in the pathway amino-acid biosynthesis; L-lysine biosynthesis via DAP pathway; (S)-tetrahydrodipicolinate from L-aspartate: step 4/4. Its function is as follows. Catalyzes the conversion of 4-hydroxy-tetrahydrodipicolinate (HTPA) to tetrahydrodipicolinate. This Shewanella amazonensis (strain ATCC BAA-1098 / SB2B) protein is 4-hydroxy-tetrahydrodipicolinate reductase.